The primary structure comprises 285 residues: Neuralized-like protein 2 (285 aa).

The segment at Met1 to Glu20 is disordered. In terms of domain architecture, NHR spans Pro23–Leu244. An SOCS box domain is found at Ser250–Glu285.

As to quaternary structure, probable component the ECS(NEURL2) E3 ubiquitin-protein ligase complex consisting of ELOB/Elongin B, ELOC/Elongin C, CUL5, RBX1 and NEURL2. Interacts with CTNNB1. Expressed specifically in skeletal and cardiac muscles.

The protein resides in the cytoplasm. It participates in protein modification; protein ubiquitination. In terms of biological role, plays an important role in the process of myofiber differentiation and maturation. Probable substrate-recognition component of a SCF-like ECS (Elongin BC-CUL2/5-SOCS-box protein) E3 ubiquitin-protein ligase complex, which mediates the ubiquitination of proteins. Probably contributes to catalysis through recognition and positioning of the substrate and the ubiquitin-conjugating enzyme. During myogenesis, controls the ubiquitination and degradation of the specific pool of CTNNB1/beta-catenin located at the sarcolemma. The polypeptide is Neuralized-like protein 2 (NEURL2) (Homo sapiens (Human)).